The chain runs to 129 residues: Large ribosomal subunit protein bL17 (129 aa).

Belongs to the bacterial ribosomal protein bL17 family. In terms of assembly, part of the 50S ribosomal subunit. Contacts protein L32.

The sequence is that of Large ribosomal subunit protein bL17 from Actinobacillus succinogenes (strain ATCC 55618 / DSM 22257 / CCUG 43843 / 130Z).